Consider the following 511-residue polypeptide: Apolipoprotein N-acyltransferase (511 aa).

The next 6 membrane-spanning stretches (helical) occupy residues 7-29 (PGWP…LAPF), 58-78 (GWWY…VSIH), 90-110 (LLML…AWLW), 125-145 (LAFA…LTGF), 163-183 (VPVG…ALLV), and 192-212 (GASL…GLYL). The 241-residue stretch at 230-470 (IQGNIAQELK…QGILRGEVIP (241 aa)) folds into the CN hydrolase domain. Glu269 acts as the Proton acceptor in catalysis. Residue Lys330 is part of the active site. Cys382 serves as the catalytic Nucleophile. A helical membrane pass occupies residues 482 to 502 (VWPLAGLAGVLLLWALLGRQL).

This sequence belongs to the CN hydrolase family. Apolipoprotein N-acyltransferase subfamily.

The protein resides in the cell inner membrane. It carries out the reaction N-terminal S-1,2-diacyl-sn-glyceryl-L-cysteinyl-[lipoprotein] + a glycerophospholipid = N-acyl-S-1,2-diacyl-sn-glyceryl-L-cysteinyl-[lipoprotein] + a 2-acyl-sn-glycero-3-phospholipid + H(+). The protein operates within protein modification; lipoprotein biosynthesis (N-acyl transfer). Its function is as follows. Catalyzes the phospholipid dependent N-acylation of the N-terminal cysteine of apolipoprotein, the last step in lipoprotein maturation. The chain is Apolipoprotein N-acyltransferase from Pseudomonas aeruginosa (strain LESB58).